The chain runs to 336 residues: Fructose-1,6-bisphosphatase class 1 (336 aa).

Glu92, Asp115, Leu117, and Asp118 together coordinate Mg(2+). Substrate contacts are provided by residues 118-121, Asn211, Tyr244, 262-264, and Lys274; these read DGSS and YLY. Residue Glu280 coordinates Mg(2+).

This sequence belongs to the FBPase class 1 family. In terms of assembly, homotetramer. Mg(2+) is required as a cofactor.

It is found in the cytoplasm. The catalysed reaction is beta-D-fructose 1,6-bisphosphate + H2O = beta-D-fructose 6-phosphate + phosphate. The protein operates within carbohydrate biosynthesis; gluconeogenesis. The sequence is that of Fructose-1,6-bisphosphatase class 1 from Aliivibrio fischeri (strain MJ11) (Vibrio fischeri).